The sequence spans 514 residues: ATP synthase subunit alpha (514 aa).

170 to 177 (GDRQIGKT) is an ATP binding site.

It belongs to the ATPase alpha/beta chains family. As to quaternary structure, F-type ATPases have 2 components, CF(1) - the catalytic core - and CF(0) - the membrane proton channel. CF(1) has five subunits: alpha(3), beta(3), gamma(1), delta(1), epsilon(1). CF(0) has three main subunits: a(1), b(2) and c(9-12). The alpha and beta chains form an alternating ring which encloses part of the gamma chain. CF(1) is attached to CF(0) by a central stalk formed by the gamma and epsilon chains, while a peripheral stalk is formed by the delta and b chains.

It is found in the cell inner membrane. The catalysed reaction is ATP + H2O + 4 H(+)(in) = ADP + phosphate + 5 H(+)(out). Functionally, produces ATP from ADP in the presence of a proton gradient across the membrane. The alpha chain is a regulatory subunit. This Pseudomonas fluorescens (strain Pf0-1) protein is ATP synthase subunit alpha.